A 631-amino-acid polypeptide reads, in one-letter code: Phosphomethylpyrimidine synthase (631 aa).

Substrate-binding positions include asparagine 239, methionine 268, tyrosine 297, histidine 333, 353–355 (SRG), 394–397 (DGLR), and glutamate 433. A Zn(2+)-binding site is contributed by histidine 437. Tyrosine 460 is a substrate binding site. A Zn(2+)-binding site is contributed by histidine 501. Residues cysteine 581, cysteine 584, and cysteine 589 each coordinate [4Fe-4S] cluster.

The protein belongs to the ThiC family. As to quaternary structure, homodimer. [4Fe-4S] cluster is required as a cofactor.

It catalyses the reaction 5-amino-1-(5-phospho-beta-D-ribosyl)imidazole + S-adenosyl-L-methionine = 4-amino-2-methyl-5-(phosphooxymethyl)pyrimidine + CO + 5'-deoxyadenosine + formate + L-methionine + 3 H(+). The protein operates within cofactor biosynthesis; thiamine diphosphate biosynthesis. Functionally, catalyzes the synthesis of the hydroxymethylpyrimidine phosphate (HMP-P) moiety of thiamine from aminoimidazole ribotide (AIR) in a radical S-adenosyl-L-methionine (SAM)-dependent reaction. In Salmonella schwarzengrund (strain CVM19633), this protein is Phosphomethylpyrimidine synthase.